A 291-amino-acid chain; its full sequence is Shikimate dehydrogenase (NADP(+)) (291 aa).

Shikimate contacts are provided by residues 23 to 25 (SFS) and threonine 70. The active-site Proton acceptor is the lysine 74. Shikimate is bound by residues asparagine 95 and aspartate 110. Residues 135–139 (GAGGA) and leucine 232 contribute to the NADP(+) site. Tyrosine 234 is a shikimate binding site. Glycine 255 serves as a coordination point for NADP(+).

It belongs to the shikimate dehydrogenase family. As to quaternary structure, homodimer.

It catalyses the reaction shikimate + NADP(+) = 3-dehydroshikimate + NADPH + H(+). Its pathway is metabolic intermediate biosynthesis; chorismate biosynthesis; chorismate from D-erythrose 4-phosphate and phosphoenolpyruvate: step 4/7. In terms of biological role, involved in the biosynthesis of the chorismate, which leads to the biosynthesis of aromatic amino acids. Catalyzes the reversible NADPH linked reduction of 3-dehydroshikimate (DHSA) to yield shikimate (SA). This Desulforamulus reducens (strain ATCC BAA-1160 / DSM 100696 / MI-1) (Desulfotomaculum reducens) protein is Shikimate dehydrogenase (NADP(+)).